A 145-amino-acid chain; its full sequence is UPF0735 ACT domain-containing protein CKL_0858 (145 aa).

The region spanning 69 to 144 (TLGLTLAHKA…SVIKVNLAAV (76 aa)) is the ACT domain.

This sequence belongs to the UPF0735 family.

The protein is UPF0735 ACT domain-containing protein CKL_0858 of Clostridium kluyveri (strain ATCC 8527 / DSM 555 / NBRC 12016 / NCIMB 10680 / K1).